The sequence spans 100 residues: Large ribosomal subunit protein uL23 (100 aa).

The protein belongs to the universal ribosomal protein uL23 family. In terms of assembly, part of the 50S ribosomal subunit. Contacts protein L29, and trigger factor when it is bound to the ribosome.

Functionally, one of the early assembly proteins it binds 23S rRNA. One of the proteins that surrounds the polypeptide exit tunnel on the outside of the ribosome. Forms the main docking site for trigger factor binding to the ribosome. The protein is Large ribosomal subunit protein uL23 of Dechloromonas aromatica (strain RCB).